Consider the following 430-residue polypeptide: Cholecystokinin receptor type A (430 aa).

The Extracellular portion of the chain corresponds to 1 to 41 (MDVVDSLFVNGSNITSACELGFENETLFCLDRPRPSKEWQP). Residues asparagine 10, asparagine 13, and asparagine 24 are each glycosylated (N-linked (GlcNAc...) asparagine). A disulfide bridge connects residues cysteine 18 and cysteine 29. A helical transmembrane segment spans residues 42 to 67 (AVQILLYSLIFLLSVLGNTLVITVLI). Residues 68-77 (RNKRMRTVTN) lie on the Cytoplasmic side of the membrane. A helical transmembrane segment spans residues 78–104 (IFLLSLAVSDLMLCLFCMPFNLIPSLL). Over 105–115 (KDFIFGSAVCK) the chain is Extracellular. Cysteine 114 and cysteine 196 are oxidised to a cystine. Residues 116–137 (TTTYFMGTSVSVSTFNLVAISL) form a helical membrane-spanning segment. Residues 138–157 (ERYGAICKPLQSRVWQTKSH) lie on the Cytoplasmic side of the membrane. The chain crosses the membrane as a helical span at residues 158–178 (ALKVIAATWCLSFTIMTPYPI). The Extracellular segment spans residues 179–210 (YSNLVPFTKNNNQTGNMCRFLLPNDVMQQTWH). The N-linked (GlcNAc...) asparagine glycan is linked to asparagine 190. The chain crosses the membrane as a helical span at residues 211–234 (TFLLLILFLIPGIVMMVAYGLISL). Residues 235–315 (ELYQGIKFDA…NLMAKKRVIR (81 aa)) lie on the Cytoplasmic side of the membrane. The helical transmembrane segment at 316–336 (MLIVIVVLFFLCWMPIFSANA) threads the bilayer. The Extracellular segment spans residues 337-351 (WRAYDTVSAERHLSG). A helical transmembrane segment spans residues 352 to 375 (TPISFILLLSYTSSCVNPIIYCFM). The Cytoplasmic portion of the chain corresponds to 376-430 (NKRFRLGFMATFPCCPNPGTPGVRGEMGEEEEGRTTGASLSRYSYSHMSTSAPPP). A lipid anchor (S-palmitoyl cysteine) is attached at cysteine 389. The segment at 396–430 (PGVRGEMGEEEEGRTTGASLSRYSYSHMSTSAPPP) is disordered. The span at 413–430 (ASLSRYSYSHMSTSAPPP) shows a compositional bias: polar residues.

It belongs to the G-protein coupled receptor 1 family.

The protein resides in the cell membrane. Receptor for cholecystokinin. Mediates pancreatic growth and enzyme secretion, smooth muscle contraction of the gall bladder and stomach. Has a 1000-fold higher affinity for CCK rather than for gastrin. It modulates feeding and dopamine-induced behavior in the central and peripheral nervous system. This receptor mediates its action by association with G proteins that activate a phosphatidylinositol-calcium second messenger system. This is Cholecystokinin receptor type A (CCKAR) from Cavia porcellus (Guinea pig).